Reading from the N-terminus, the 1083-residue chain is Regulator of the glycerol channel 1 (1083 aa).

Disordered regions lie at residues 1–46 and 69–89; these read MSDY…GSSD and LKNE…KENK. The segment covering 13–31 has biased composition (polar residues); sequence GGISKQPATPGSTRSSSRN. S136, S249, S252, S481, and S537 each carry phosphoserine. Residues 495–606 enclose the PH domain; the sequence is CIRVGYLLKK…DCSLKDSTDS (112 aa). Residues 534 to 582 form a disordered region; the sequence is DSKSPRSKNKPVVEQSDISRVNKDGTNAGSHPSSKGTQDPKLTKRRKGL. Residues 549 to 570 are compositionally biased toward polar residues; that stretch reads SDISRVNKDGTNAGSHPSSKGT. Phosphoserine occurs at positions 652, 765, and 813. 2 positions are modified to phosphothreonine: T817 and T857. A phosphoserine mark is found at S866, S879, S918, S966, S969, and S975. Positions 979-1083 are disordered; the sequence is EENRTQNCSG…TVPATSASSK (105 aa). Polar residues-rich tracts occupy residues 983 to 992, 1043 to 1061, and 1071 to 1083; these read TQNCSGSRKS, LKKT…VSND, and STNT…ASSK. A phosphoserine mark is found at S1059, S1081, and S1082.

The protein belongs to the RGC1 family.

It is found in the cytoplasm. Functionally, positive regulator of FPS1 glycerol channel required for the glycerol efflux. This Saccharomyces cerevisiae (strain ATCC 204508 / S288c) (Baker's yeast) protein is Regulator of the glycerol channel 1 (RGC1).